The primary structure comprises 200 residues: MKIILATSNKHKVLELKEILKDFEIYAFDEVLTPFEIEENGKTFKENALIKARAVFNALDEKQKKDFIALSDDSGICVDVLEGNPGIYSARFSGKGDDKSNRDKLVNEMIKKGFNQSRAHYVAAIAMVGLMGEFSTHGTMYGKVIDTEKGENGFGYDSLFIPKGFDKTLAQLSVDEKNNISHRFKALELAKIILKILTKG.

7–12 (TSNKHK) is a substrate binding site. The Mg(2+) site is built by Glu-38 and Asp-73. Asp-73 (proton acceptor) is an active-site residue. Residues Ser-74, 154–157 (FGYD), Lys-177, and 182–183 (HR) each bind substrate.

It belongs to the HAM1 NTPase family. Homodimer. Mg(2+) is required as a cofactor.

It catalyses the reaction XTP + H2O = XMP + diphosphate + H(+). The catalysed reaction is dITP + H2O = dIMP + diphosphate + H(+). The enzyme catalyses ITP + H2O = IMP + diphosphate + H(+). In terms of biological role, pyrophosphatase that catalyzes the hydrolysis of nucleoside triphosphates to their monophosphate derivatives, with a high preference for the non-canonical purine nucleotides XTP (xanthosine triphosphate), dITP (deoxyinosine triphosphate) and ITP. Seems to function as a house-cleaning enzyme that removes non-canonical purine nucleotides from the nucleotide pool, thus preventing their incorporation into DNA/RNA and avoiding chromosomal lesions. In Campylobacter jejuni subsp. doylei (strain ATCC BAA-1458 / RM4099 / 269.97), this protein is dITP/XTP pyrophosphatase.